The primary structure comprises 191 residues: dTTP/UTP pyrophosphatase (191 aa).

Asp69 (proton acceptor) is an active-site residue.

Belongs to the Maf family. YhdE subfamily. Requires a divalent metal cation as cofactor.

Its subcellular location is the cytoplasm. It carries out the reaction dTTP + H2O = dTMP + diphosphate + H(+). The enzyme catalyses UTP + H2O = UMP + diphosphate + H(+). Functionally, nucleoside triphosphate pyrophosphatase that hydrolyzes dTTP and UTP. May have a dual role in cell division arrest and in preventing the incorporation of modified nucleotides into cellular nucleic acids. In Desulforamulus reducens (strain ATCC BAA-1160 / DSM 100696 / MI-1) (Desulfotomaculum reducens), this protein is dTTP/UTP pyrophosphatase.